We begin with the raw amino-acid sequence, 438 residues long: Serine/threonine exchanger SteT (438 aa).

Residues Met1–Glu11 are Cytoplasmic-facing. A helical transmembrane segment spans residues Ile12–Met32. Over Lys33 to Lys45 the chain is Extracellular. Residues Met46–Ala66 traverse the membrane as a helical segment. Residues Glu67–Gln98 are Cytoplasmic-facing. Residues Ile99–Ala119 traverse the membrane as a helical segment. At Asn120 to Ser126 the chain is on the extracellular side. Residues Gly127–Gly147 form a helical membrane-spanning segment. Topologically, residues Thr148–Gly151 are cytoplasmic. The chain crosses the membrane as a helical span at residues Gly152–Phe172. At Gly173–Asn193 the chain is on the extracellular side. Residues Phe194–Leu214 traverse the membrane as a helical segment. At Gly215–Thr230 the chain is on the cytoplasmic side. The helical transmembrane segment at Gly231 to Leu251 threads the bilayer. The Extracellular segment spans residues Ser252 to Thr269. The chain crosses the membrane as a helical span at residues Met270–Gly290. Residues Cys291–Thr327 lie on the Cytoplasmic side of the membrane. A helical transmembrane segment spans residues Pro328–Pro348. Residues Asp349 to Ser352 are Extracellular-facing. Residues Glu353 to Leu373 form a helical membrane-spanning segment. Over Arg374–Leu388 the chain is Cytoplasmic. A helical membrane pass occupies residues Tyr389–Ile409. Topologically, residues Thr410–Asp411 are extracellular. Residues Thr412–Met432 form a helical membrane-spanning segment. The Cytoplasmic segment spans residues Lys433–Ser438.

The protein belongs to the amino acid-polyamine-organocation (APC) superfamily. L-type amino acid transporter (LAT) (TC 2.A.3.8) family. In terms of assembly, monomer.

The protein localises to the cell membrane. Its function is as follows. Exhibits an obligate exchange activity for serine, threonine and aromatic amino acids. This is Serine/threonine exchanger SteT (steT) from Bacillus subtilis (strain 168).